The chain runs to 546 residues: Hexose transporter HXT10 (546 aa).

The Cytoplasmic segment spans residues 1-44; sequence MVSSSVSILGTSAKASTSLSRKDEIKLTPETREASLDIPYKPII. A helical transmembrane segment spans residues 45–65; sequence AYWTVMGLCLMIAFGGFIFGW. Residues 66–100 lie on the Extracellular side of the membrane; it reads DTGTISGFINQTDFKRRFGELQRDGSFQLSDVRTG. An N-linked (GlcNAc...) asparagine glycan is attached at Asn75. The helical transmembrane segment at 101-121 threads the bilayer; the sequence is LIVGIFNIGCALGGLTLGRLG. Residues 122 to 127 are Cytoplasmic-facing; sequence DIYGRK. Residues 128-148 form a helical membrane-spanning segment; it reads IGLMCVILVYVVGIVIQIASS. Residues 149 to 158 are Extracellular-facing; the sequence is DKWYQYFIGR. The helical transmembrane segment at 159 to 179 threads the bilayer; that stretch reads IVSGMGVGGVAVLSPTLISEI. At 180–185 the chain is on the cytoplasmic side; the sequence is SPKHLR. The chain crosses the membrane as a helical span at residues 186-206; the sequence is GTCVSFYQLMITLGIFLGYCT. The Extracellular segment spans residues 207-220; that stretch reads NYGTKKYSNSIQWR. The helical transmembrane segment at 221 to 241 threads the bilayer; that stretch reads VPLGLCFAWAIFMVIGMVMVP. Residues 242–324 are Cytoplasmic-facing; it reads ESPRYLVEKG…IQSLQQLTGC (83 aa). The helical transmembrane segment at 325-341 threads the bilayer; sequence NYFFYYGTTIFNAVGMQ. Topologically, residues 342 to 347 are extracellular; the sequence is DSFETS. The helical transmembrane segment at 348-365 threads the bilayer; it reads IVLGAVNFASTFVALYIV. Residues 366-372 lie on the Cytoplasmic side of the membrane; it reads DKFGRRK. Residues 373-393 form a helical membrane-spanning segment; the sequence is CLLWGSASMAICFVIFATVGV. At 394-415 the chain is on the extracellular side; sequence TRLWPQGKDQPSSQSAGNVMIV. Residues 416–436 traverse the membrane as a helical segment; that stretch reads FTCFFIFSFAITWAPIAYVIV. Topologically, residues 437-453 are cytoplasmic; the sequence is AETYPLRVKNRAMAIAV. A helical membrane pass occupies residues 454–474; sequence GANWMWGFLIGFFTPFITRSI. Position 475 (Gly475) is a topological domain, extracellular. A helical membrane pass occupies residues 476–496; the sequence is FSYGYVFMGCLIFSYFYVFFF. Over 497-546 the chain is Cytoplasmic; sequence VCETKGLTLEEVNEMYEERIKPWKSGGWIPSSRRTPQPTSSTPLVIVDSK.

The protein belongs to the major facilitator superfamily. Sugar transporter (TC 2.A.1.1) family.

Its subcellular location is the membrane. Probable glucose transporter. The sequence is that of Hexose transporter HXT10 (HXT10) from Saccharomyces cerevisiae (strain ATCC 204508 / S288c) (Baker's yeast).